The primary structure comprises 426 residues: MSTLIEAIVAREVLDSRGNPTIEVDVRLESGDVGRAIVPSGASTGAHEALELRDGDKSRYNGKGVLKAVQAVNEDIAEALIGFDAADQIALDQELIALDGTPNKSKLGANAILGVSLAAAKAAAAAFGLPLYRYLGGVYAHVLPVPMMNIMNGGQHATNSTDFQEFMIMPVGAESFREGLRWGAEIYHMLKKVIHDRGFSTTVGDEGGFAPSLPTNDAPLQLIMEAIEKAGYRPGEQIVIALDPATTEIFEDGKYHLKREGRSLSSAEMVDYWVDLVNRYPIISLEDGLAEDDWEGWALLRAKLGDRVQLVGDDFLVTNVQRLQRAIEAKAANSILIKLNQIGSLTETLSAIQLAQRSGWTAVVSHRSGESEDVTIADLVVATNAGQIKTGAPARTDRIAKYNQLLRIEEELGSAARYAGRSAFKV.

Phosphoenolpyruvate is bound at residue Gly-41. Ser-43 is a binding site for Mg(2+). Phosphoenolpyruvate is bound at residue Glu-165. The (2R)-2-phosphoglycerate site is built by Glu-165 and Glu-206. Glu-206 functions as the Proton donor in the catalytic mechanism. The Mg(2+) site is built by Asp-243, Glu-286, and Asp-313. The phosphoenolpyruvate site is built by Asp-313, Lys-338, Arg-367, Ser-368, and Lys-389. 3 residues coordinate (2R)-2-phosphoglycerate: Lys-338, Arg-367, and Ser-368. The active-site Proton acceptor is the Lys-338.

This sequence belongs to the enolase family. As to quaternary structure, homodimer. It depends on Mg(2+) as a cofactor.

The protein resides in the cytoplasm. The protein localises to the secreted. Its subcellular location is the cell surface. The catalysed reaction is (2R)-2-phosphoglycerate = phosphoenolpyruvate + H2O. It functions in the pathway carbohydrate degradation; glycolysis; pyruvate from D-glyceraldehyde 3-phosphate: step 4/5. Catalyzes the reversible conversion of 2-phosphoglycerate (2-PG) into phosphoenolpyruvate (PEP). It is essential for the degradation of carbohydrates via glycolysis. In Chloroflexus aurantiacus (strain ATCC 29366 / DSM 635 / J-10-fl), this protein is Enolase.